A 318-amino-acid chain; its full sequence is Transcription factor FER-LIKE IRON DEFICIENCY-INDUCED TRANSCRIPTION FACTOR (318 aa).

The tract at residues 90 to 138 (FDGDSVRAGGEEDEEDYNDGDDSSATTTNNDGTRKTKTDRSRTLISERR) is disordered. The segment covering 100–111 (EEDEEDYNDGDD) has biased composition (acidic residues). Residues 121 to 136 (GTRKTKTDRSRTLISE) show a composition bias toward basic and acidic residues. Residues 127-176 (TDRSRTLISERRRRGRMKDKLYALRSLVPNITKMDKASIVGDAVLYVQEL) form the bHLH domain.

As to quaternary structure, homodimer. As to expression, expressed in roots and inflorescence, and to a lower extent, in leaves and stems. In roots, confined to the outer cell layers, specifically in the differentiation zone. Also detected in the endodermis and inner tissues of the central cylinder.

It localises to the nucleus. Functionally, transcription factor. Essential protein involved in iron uptake responses. Regulates FRO2 at the level of mRNA accumulation and IRT1 at the level of protein accumulation. Confers enhanced iron mobilization responses at low iron supply. The protein is Transcription factor FER-LIKE IRON DEFICIENCY-INDUCED TRANSCRIPTION FACTOR (FIT) of Arabidopsis thaliana (Mouse-ear cress).